Consider the following 458-residue polypeptide: Dynein regulatory complex protein 10 (458 aa).

Coiled coils occupy residues 96–137 (GQTL…HKVN), 209–255 (IQDI…KNHL), and 285–379 (QVRL…IRAE). In terms of domain architecture, IQ spans 397–426 (MVRAATLIQAVWKGYLVRSILRSKKKKRGK). The segment at 419-458 (SKKKKRGKGKGKDKGKGKEKPKEEKAKEKKPKAKGKGKKK) is disordered. The span at 428-445 (KGKDKGKGKEKPKEEKAK) shows a compositional bias: basic and acidic residues. Residues 446-458 (EKKPKAKGKGKKK) are compositionally biased toward basic residues.

The protein belongs to the DRC10 family. In terms of assembly, component of the nexin-dynein regulatory complex (N-DRC). Interacts with CFAP52.

The protein localises to the cytoplasm. The protein resides in the cytoskeleton. It is found in the flagellum axoneme. In terms of biological role, component of the nexin-dynein regulatory complex (N-DRC), a key regulator of ciliary/flagellar motility which maintains the alignment and integrity of the distal axoneme and regulates microtubule sliding in motile axonemes. The protein is Dynein regulatory complex protein 10 (Iqcd) of Mus musculus (Mouse).